A 470-amino-acid polypeptide reads, in one-letter code: Nuclear receptor subfamily 0 group B member 1 (470 aa).

3 tandem repeats follow at residues 1–67 (MAGE…YRCC), 68–133 (FCGK…YRCC), and 134–200 (FCGE…YRCC). The tract at residues 1-253 (MAGENHQWQG…RPVALKSPQV (253 aa)) is 4 X 67 AA tandem repeats. Short sequence motifs (LXXLL motif) lie at residues 13 to 17 (LYNML), 80 to 84 (LYSML), and 146 to 150 (LYSLL). The 4; truncated repeat unit spans residues 201–253 (FCGEDHPQQGSTLYCVPTSTNQAQAAPEERPRAPWWDTSSGALRPVALKSPQV). In terms of domain architecture, NR LBD spans 205–469 (DHPQQGSTLY…DMMLEMLCTK (265 aa)). The AF-2 motif motif lies at 461–466 (MMLEML).

This sequence belongs to the nuclear hormone receptor family. NR0 subfamily. As to quaternary structure, homodimer. Interacts with NR5A1, NR5A2, NR0B2 and with COPS2. Interacts with ESRRB; represses ESRRB activity at the GATA6 promoter.

Its subcellular location is the nucleus. It localises to the cytoplasm. In terms of biological role, nuclear receptor that lacks a DNA-binding domain and acts as a corepressor that inhibits the transcriptional activity of other nuclear receptors through heterodimeric interactions. Component of a cascade required for the development of the hypothalamic-pituitary-adrenal-gonadal axis. May also have a role in the development of the embryo and in the maintenance of embryonic stem cell pluripotency. The polypeptide is Nuclear receptor subfamily 0 group B member 1 (NR0B1) (Homo sapiens (Human)).